The chain runs to 372 residues: NADH-quinone oxidoreductase subunit H (372 aa).

8 helical membrane passes run 34 to 54 (LPLGLLVIAAIPLVFIALYAL), 106 to 126 (FLFVIGPGVLFVGSFLAFAVL), 139 to 159 (VGLFYAIGIVALEVVGILAAG), 178 to 198 (IVSYEIPAAIALLCGAMMAGT), 217 to 237 (FFLFQSPIAWLPFLIYFIASL), 269 to 289 (VIFLAEYGSMFMVSAIIAIVF), 313 to 333 (VWGAFWIIMKGFFFIFVQMWL), and 352 to 372 (VLTPFAFVSFVLTAIWMIYVP).

This sequence belongs to the complex I subunit 1 family. In terms of assembly, NDH-1 is composed of 14 different subunits. Subunits NuoA, H, J, K, L, M, N constitute the membrane sector of the complex.

It is found in the cell inner membrane. It carries out the reaction a quinone + NADH + 5 H(+)(in) = a quinol + NAD(+) + 4 H(+)(out). Its function is as follows. NDH-1 shuttles electrons from NADH, via FMN and iron-sulfur (Fe-S) centers, to quinones in the respiratory chain. The immediate electron acceptor for the enzyme in this species is believed to be ubiquinone. Couples the redox reaction to proton translocation (for every two electrons transferred, four hydrogen ions are translocated across the cytoplasmic membrane), and thus conserves the redox energy in a proton gradient. This subunit may bind ubiquinone. This Chlorobium luteolum (strain DSM 273 / BCRC 81028 / 2530) (Pelodictyon luteolum) protein is NADH-quinone oxidoreductase subunit H.